A 296-amino-acid chain; its full sequence is tRNA pseudouridine synthase B (296 aa).

The active-site Nucleophile is aspartate 38.

Belongs to the pseudouridine synthase TruB family. Type 1 subfamily.

The enzyme catalyses uridine(55) in tRNA = pseudouridine(55) in tRNA. Functionally, responsible for synthesis of pseudouridine from uracil-55 in the psi GC loop of transfer RNAs. This is tRNA pseudouridine synthase B from Ehrlichia chaffeensis (strain ATCC CRL-10679 / Arkansas).